The following is a 639-amino-acid chain: Alpha-dioxygenase 1 (639 aa).

Catalysis depends on H163, which acts as the Proton acceptor. Position 164 (D164) interacts with Ca(2+). Residue H168 coordinates heme b. Ca(2+)-binding residues include T216, W218, D220, and S222. Heme b-binding residues include H389, R486, and R490.

The protein belongs to the peroxidase family. As to quaternary structure, forms monomers in solution. Heme b is required as a cofactor. Ca(2+) serves as cofactor. Expressed in roots (epiderm), mature flowers (e.g. anthers) and senescing leaves.

It localises to the lipid droplet. It carries out the reaction a 1,2-saturated fatty acid + O2 = a (2R)-2-hydroperoxy fatty acid. The enzyme catalyses (9Z,12Z,15Z)-octadecatrienoate + O2 = (R)-2-hydroperoxy-(9Z,12Z,15Z)-octadecatrienoate. It catalyses the reaction hexadecanoate + O2 = (2R)-2-hydroperoxyhexadecanoate. The catalysed reaction is (9Z,12Z)-octadecadienoate + O2 = (2R,9Z,12Z)-2-hydroperoxyoctadecadienoate. It carries out the reaction (9Z)-octadecenoate + O2 = (2R,9Z)-2-hydroperoxyoctadecenoate. Its function is as follows. Alpha-dioxygenase that catalyzes the primary oxygenation step of a variety of 14-20 carbon fatty acids, containing up to three unsaturated bonds, into their corresponding 2R-hydroperoxides. Involved in the production of oxylipins that function in cell signaling, wound healing, and protection from infection. Mediates protection against oxidative stress and cell death, probably by generating some lipid-derived molecules. Promotes local and systemic plant defense in a salicylic acid (SA)-dependent manner, including the establishment of systemic acquired resistance (SAR) in response to incompatible interaction. Involved in a negative regulation of abscisic acid (ABA)-mediated signaling pathway. The sequence is that of Alpha-dioxygenase 1 from Arabidopsis thaliana (Mouse-ear cress).